Here is a 459-residue protein sequence, read N- to C-terminus: Siroheme synthase 2 (459 aa).

Residues 1-204 (MDYLPIFCQL…EDRERVQQLT (204 aa)) form a precorrin-2 dehydrogenase /sirohydrochlorin ferrochelatase region. Residues 22–23 (EI) and 43–44 (LD) each bind NAD(+). Ser128 is subject to Phosphoserine. A uroporphyrinogen-III C-methyltransferase region spans residues 216-459 (GEVTLVGAGP…KLSWFSDQTA (244 aa)). Residue Pro225 participates in S-adenosyl-L-methionine binding. Asp248 acts as the Proton acceptor in catalysis. Residue Lys270 is the Proton donor of the active site. Residues 301 to 303 (GGD), Ile306, 331 to 332 (TA), Met382, and Gly411 contribute to the S-adenosyl-L-methionine site.

It in the N-terminal section; belongs to the precorrin-2 dehydrogenase / sirohydrochlorin ferrochelatase family. The protein in the C-terminal section; belongs to the precorrin methyltransferase family.

It catalyses the reaction uroporphyrinogen III + 2 S-adenosyl-L-methionine = precorrin-2 + 2 S-adenosyl-L-homocysteine + H(+). The enzyme catalyses precorrin-2 + NAD(+) = sirohydrochlorin + NADH + 2 H(+). The catalysed reaction is siroheme + 2 H(+) = sirohydrochlorin + Fe(2+). Its pathway is cofactor biosynthesis; adenosylcobalamin biosynthesis; precorrin-2 from uroporphyrinogen III: step 1/1. It participates in cofactor biosynthesis; adenosylcobalamin biosynthesis; sirohydrochlorin from precorrin-2: step 1/1. It functions in the pathway porphyrin-containing compound metabolism; siroheme biosynthesis; precorrin-2 from uroporphyrinogen III: step 1/1. The protein operates within porphyrin-containing compound metabolism; siroheme biosynthesis; siroheme from sirohydrochlorin: step 1/1. Its pathway is porphyrin-containing compound metabolism; siroheme biosynthesis; sirohydrochlorin from precorrin-2: step 1/1. In terms of biological role, multifunctional enzyme that catalyzes the SAM-dependent methylations of uroporphyrinogen III at position C-2 and C-7 to form precorrin-2 via precorrin-1. Then it catalyzes the NAD-dependent ring dehydrogenation of precorrin-2 to yield sirohydrochlorin. Finally, it catalyzes the ferrochelation of sirohydrochlorin to yield siroheme. The polypeptide is Siroheme synthase 2 (Pectobacterium atrosepticum (strain SCRI 1043 / ATCC BAA-672) (Erwinia carotovora subsp. atroseptica)).